The chain runs to 1200 residues: Calcium-activated potassium channel slowpoke (1200 aa).

Over 1–48 (MASGLIDTNFSSTLANGMSGCDQSTVESLADDPTDSPFDADDCLKVRK) the chain is Extracellular. Residues 49–69 (YWCFLLSSIFTFLAGLLVVLL) traverse the membrane as a helical segment. Topologically, residues 70-127 (WRAFAFVCCRKEPDLGPNDPKQKEQKASRNKQEFEGTFMTEAKDWAGELISGQTTTGR) are cytoplasmic. A helical membrane pass occupies residues 128–149 (ILVVLVFILSIASLIIYFVDAS). Residues 150–164 (SEEVERCQKWSNNIT) are Extracellular-facing. Residues 165–185 (QQIDLAFNIFFMVYFFIRFIA) traverse the membrane as a helical segment. The Cytoplasmic segment spans residues 186 to 189 (ASDK). The chain crosses the membrane as a helical span at residues 190–210 (LWFMLEMYSFVDYFTIPPSFV). The Extracellular portion of the chain corresponds to 211–214 (SIYL). A helical; Voltage-sensor membrane pass occupies residues 215–235 (DRTWIGLRFLRALRLMTVPDI). The Cytoplasmic segment spans residues 236 to 250 (LQYLNVLKTSSSIRL). The helical transmembrane segment at 251-271 (AQLVSIFISVWLTAAGIIHLL) threads the bilayer. Residues 272 to 284 (ENSGDPLDFNNAH) are Extracellular-facing. Positions 285–307 (RLSYWTCVYFLIVTMSTVGYGDV) form an intramembrane region, pore-forming. The Selectivity for potassium signature appears at 301–304 (TVGY). The Extracellular segment spans residues 308 to 316 (YCETVLGRT). Residues 317–337 (FLVFFLLVGLAMFASSIPEII) form a helical membrane-spanning segment. At 338 to 1200 (ELVGSGNKYG…GGGSNKDDNS (863 aa)) the chain is on the cytoplasmic side. An RCK N-terminal 1 domain is found at 356 to 498 (KRHIVVCGHI…WDWKQGDDVI (143 aa)). The tract at residues 505–525 (LGFIAQSCLAPGFSTMMANLF) is segment S7. Residues 563–583 (IPFAQATELCFSKLKLLLLAI) form a segment S8 region. Disordered stretches follow at residues 681–713 (RGSVSGDITRDREDTNLLNRNVRRPNGTGNGTG) and 746–785 (RQVEGQVISPSQYNRPTSRSSGTGTQNQNGGVSLPAGIAD). The span at 746 to 776 (RQVEGQVISPSQYNRPTSRSSGTGTQNQNGG) shows a compositional bias: polar residues. The tract at residues 828–848 (VLNGHVVVCLFADPDSPLIGL) is segment S9. In terms of domain architecture, RCK N-terminal 2 spans 830-974 (NGHVVVCLFA…ATAGSPIVLQ (145 aa)). Ser-978 carries the phosphoserine modification. A Calcium bowl motif is present at residues 988–1010 (TELVNDSNVQFLDQDDDDDPDTE). The segment S10 stretch occupies residues 1017-1037 (FACGTAFAVSVLDSLMSTTYF). Residues 1170–1200 (PPAVRAPAGGRGTNTQGSGVGGGGSNKDDNS) are disordered.

It belongs to the potassium channel family. Calcium-activated (TC 1.A.1.3) subfamily. Slo sub-subfamily. Homotetramer; which constitutes the calcium-activated potassium channel. Interacts with Slip1. Interacts with Slob, and, indirectly with 14-3-3-zeta via its interaction with Slob. Interacts with Pka-C1 and Src kinases, which can bind simultaneously to it. In terms of processing, phosphorylated. Phosphorylation may be mediated by both PKA and SRC kinases, which activate the channel activity. Phosphorylation by PKA is however unclear. Indeed, although modulation of channel activity requires Pka-C1, it does not interact with the whole PKA holoenzyme. Moreover, modulation of activity does not depend upon phosphorylation of Ser-978. As to expression, expressed in muscle cells, neurons of the CNS and PNS, mushroom bodies, a limited number of cells in embryonic and larval midgut and in epithelial-derived tracheal cells. During pupariation and embryogenesis, it is expressed in muscles many hours prior to the appearance of functional channels.

The protein localises to the membrane. Potassium channel activated by both membrane depolarization or increase in cytosolic Ca(2+) that mediates export of K(+). Its activation dampens the excitatory events that elevate the cytosolic Ca(2+) concentration and/or depolarize the cell membrane. It therefore contributes to repolarization of the membrane potential. Kinetics are determined by alternative splicing, phosphorylation status and its combination interaction with Slob and 14-3-3-zeta. While the interaction with Slob1 alone increases its activity, its interaction with both Slob1 and 14-3-3-zeta decreases its activity. This is Calcium-activated potassium channel slowpoke (slo) from Drosophila melanogaster (Fruit fly).